An 881-amino-acid chain; its full sequence is MRFSHFLKYNAVPEWQNHYMDYSELKNLIYTLQTDELQVGDNEEGFGAGKSSNITDRFKNKFSFKNAKEDTSSGMNKDAGIVEETIELRELPTAQTVAAKPSPFRRMKEKIFYKRRSSSASSVSSTANENLQLDTYDTFVGDLTAEKQKVDDFYKRTEAKFYDKFDALVKDLKKIGVIEYDIDDDTLFNEPIASTNDEVPPLDLDDDEDDDEFYDDQSNIEDNTALLHHSQYNIKSQKKSLLKKSIVNLYIDLCQLKSFIELNRIGFAKITKKSDKVLHLNTRTELIESEQFFKDTYAFQAETIELLNSKISQLVTFYARITDRPHNISHSKQELKSYLHDHIVWERSNTWKDMLGLLSQADELTPKETEYNANKLVGKLDLEYYRWPLPRPINLKFTSINNVALPKLFFTKKAYKIYFIILVTGLLLGIKTFNDAAQHRCMALVECVAFLWASEAIPLHITAFLVPLLVVLFKVLKTSDGAIMSAASASSEILAAMWSSTIMILLAGFTLGEVLAQYNIAKVLASWLLAFAGCKPRNVLLMAMCVVFFLSMWISNVAAPVLTYSLLSPLLDAMDADSPFAQALVLGVALAANIGGMSSPISSPQNIISMSYLKPYGIGWGQFFAVALPSGILAMLLVWILLFTTFKMNKTKLEKFKPIKTKFTVKQYYIITVTVATILLWCVESQIEGAFGSSGQIAIIPIVLFFGTGLLSTQDLNAFPWSIVILAMGGIALGKAVSSSGLLSTIAKALQKKIENDGVFAILCIFGILMLVVGTFVSHTVSAIIIIPLVQEVGDKLGNPKAAPILVFGCALLSSCGMGLASSGFPNVTAISKVDRKGDRYLSVMTFLTRGVPASILAFLCVITLGYGIMASVVKGNATSA.

The SPX domain occupies 1-288 (MRFSHFLKYN…HLNTRTELIE (288 aa)). The next 12 membrane-spanning stretches (helical) occupy residues 417–437 (IYFI…NDAA), 456–476 (AIPL…FKVL), 493–513 (ILAA…TLGE), 514–534 (VLAQ…FAGC), 539–559 (VLLM…NVAA), 581–601 (AQAL…SSPI), 663–683 (FTVK…LWCV), 691–711 (FGSS…TGLL), 718–738 (AFPW…KAVS), 758–778 (GVFA…TFVS), 805–825 (ILVF…SSGF), and 854–874 (ASIL…ASVV).

The protein belongs to the CitM (TC 2.A.11) transporter family.

It is found in the membrane. Low-affinity phosphate transporter involved in the control of cellular phosphate levels. The protein is Low-affinity phosphate transporter PHO90 (PHO90) of Saccharomyces cerevisiae (strain ATCC 204508 / S288c) (Baker's yeast).